Consider the following 444-residue polypeptide: Signal recognition particle 54 kDa protein (444 aa).

Residues 104 to 111 (GLQGSGKT), 184 to 188 (DTAGR), and 242 to 245 (TKLD) contribute to the GTP site.

This sequence belongs to the GTP-binding SRP family. SRP54 subfamily. In terms of assembly, part of the signal recognition particle protein translocation system, which is composed of SRP and FtsY. Archaeal SRP consists of a 7S RNA molecule of 300 nucleotides and two protein subunits: SRP54 and SRP19.

The protein resides in the cytoplasm. It catalyses the reaction GTP + H2O = GDP + phosphate + H(+). Involved in targeting and insertion of nascent membrane proteins into the cytoplasmic membrane. Binds to the hydrophobic signal sequence of the ribosome-nascent chain (RNC) as it emerges from the ribosomes. The SRP-RNC complex is then targeted to the cytoplasmic membrane where it interacts with the SRP receptor FtsY. This is Signal recognition particle 54 kDa protein from Methanothrix thermoacetophila (strain DSM 6194 / JCM 14653 / NBRC 101360 / PT) (Methanosaeta thermophila).